We begin with the raw amino-acid sequence, 497 residues long: Glycerol kinase (497 aa).

Thr-12 serves as a coordination point for ADP. 3 residues coordinate ATP: Thr-12, Thr-13, and Ser-14. Position 12 (Thr-12) interacts with sn-glycerol 3-phosphate. Arg-16 provides a ligand contact to ADP. The sn-glycerol 3-phosphate site is built by Arg-82, Glu-83, Tyr-134, and Asp-243. Glycerol-binding residues include Arg-82, Glu-83, Tyr-134, Asp-243, and Gln-244. Residues Thr-265 and Gly-308 each coordinate ADP. The ATP site is built by Thr-265, Gly-308, Gln-312, and Gly-409. The ADP site is built by Gly-409 and Asn-413.

The protein belongs to the FGGY kinase family. Homotetramer and homodimer (in equilibrium).

The catalysed reaction is glycerol + ATP = sn-glycerol 3-phosphate + ADP + H(+). The protein operates within polyol metabolism; glycerol degradation via glycerol kinase pathway; sn-glycerol 3-phosphate from glycerol: step 1/1. Activated by phosphorylation and inhibited by fructose 1,6-bisphosphate (FBP). Functionally, key enzyme in the regulation of glycerol uptake and metabolism. Catalyzes the phosphorylation of glycerol to yield sn-glycerol 3-phosphate. The polypeptide is Glycerol kinase (Caldanaerobacter subterraneus subsp. tengcongensis (strain DSM 15242 / JCM 11007 / NBRC 100824 / MB4) (Thermoanaerobacter tengcongensis)).